Reading from the N-terminus, the 316-residue chain is Neutrophil-stimulating factor 1 (316 aa).

Positions 1–21 (METSLPITVVFLIVLITGAQT) are cleaved as a signal peptide. The segment at 126–316 (HGEMLERMTA…WFAVSWNDRG (191 aa)) is involved in interaction with human CD47. N-linked (GlcNAc...) asparagine glycosylation is present at asparagine 169.

Interacts with human CD4. Interacts with human CD47; the interaction results in inhibition of phagocytosis activity of host macrophages. In terms of tissue distribution, female salivary gland (at protein level). Saliva (at protein level). Some expression in ovary and midgut (at protein level).

The protein resides in the secreted. In terms of biological role, activates host neutrophils; induces expression of IL1B and CXCL2 at the bite site. Promotes activation of human CD4(+) T-cells. Inhibits phagocytosis activity of host macrophages via the interaction with CD47 receptor on their surface. Suppresses expression of pro-inflammatory cytokines, such as IFN-gamma/IFNG, IL2, TNF-alpha/TNF, IL12B, IL8/CXCL8, IL6, in host white blood cells. Reduces host polymorphonuclear neutrophil chemotaxis induced by N-formylmethionine-leucylphenylalanine (fMLF). Reduces CD11b/ITGAM expression in fMLF-induced host polymorphonuclear neutrophils. (Microbial infection) Enhances early replication of Zika virus in the host. This Aedes aegypti (Yellowfever mosquito) protein is Neutrophil-stimulating factor 1.